Here is a 130-residue protein sequence, read N- to C-terminus: Protein ApaG (130 aa).

Residues 3–127 form the ApaG domain; it reads RALTRDIEVT…FSLDTPDLRR (125 aa).

The sequence is that of Protein ApaG from Allorhizobium ampelinum (strain ATCC BAA-846 / DSM 112012 / S4) (Agrobacterium vitis (strain S4)).